Consider the following 555-residue polypeptide: Chaperonin GroEL 2 (555 aa).

ATP is bound by residues 29-32 (TLGP), 86-90 (DGTTT), glycine 414, 480-482 (NAL), and aspartate 496.

This sequence belongs to the chaperonin (HSP60) family. Forms a cylinder of 14 subunits composed of two heptameric rings stacked back-to-back. Interacts with the co-chaperonin GroES.

The protein resides in the cytoplasm. It carries out the reaction ATP + H2O + a folded polypeptide = ADP + phosphate + an unfolded polypeptide.. Functionally, together with its co-chaperonin GroES, plays an essential role in assisting protein folding. The GroEL-GroES system forms a nano-cage that allows encapsulation of the non-native substrate proteins and provides a physical environment optimized to promote and accelerate protein folding. In Synechococcus sp. (strain ATCC 27144 / PCC 6301 / SAUG 1402/1) (Anacystis nidulans), this protein is Chaperonin GroEL 2.